The sequence spans 235 residues: MDNDGINADPMELEKFSQLAHHWWDPNSEFKPLHEINPLRLNYIDEIIGGLSEKTVIDVGCGGGILSESMAARGASVTGIDLSDKALKVAKLHLLESGNQVDYRKITVEALATERPRYYDVVTCMEMLEHVPDPASVIQSCARLVKSGGWVFFSTLNRNPKSYLYAIIGAEYILRLLPRGTHEYAKFIKPSELAHMARSAGLMESGIVGMTYNPITKVYALEADTSVNYIMAFRA.

The S-adenosyl-L-methionine site is built by Arg-40, Gly-60, Asp-81, and Met-125.

Belongs to the methyltransferase superfamily. UbiG/COQ3 family.

It carries out the reaction a 3-demethylubiquinol + S-adenosyl-L-methionine = a ubiquinol + S-adenosyl-L-homocysteine + H(+). It catalyses the reaction a 3-(all-trans-polyprenyl)benzene-1,2-diol + S-adenosyl-L-methionine = a 2-methoxy-6-(all-trans-polyprenyl)phenol + S-adenosyl-L-homocysteine + H(+). Its pathway is cofactor biosynthesis; ubiquinone biosynthesis. Its function is as follows. O-methyltransferase that catalyzes the 2 O-methylation steps in the ubiquinone biosynthetic pathway. The chain is Ubiquinone biosynthesis O-methyltransferase from Nitrosomonas europaea (strain ATCC 19718 / CIP 103999 / KCTC 2705 / NBRC 14298).